The primary structure comprises 469 residues: Glutamate--tRNA ligase (469 aa).

A 'HIGH' region motif is present at residues 11–21; it reads PSPTGFIHLGN. Positions 118-131 are enriched in basic and acidic residues; sequence GEKPRYDGTWRPEP. The disordered stretch occupies residues 118-139; the sequence is GEKPRYDGTWRPEPGKVLPEPP. The 'KMSKS' region signature appears at 243–247; sequence KMSKR. Lysine 246 contributes to the ATP binding site.

The protein belongs to the class-I aminoacyl-tRNA synthetase family. Glutamate--tRNA ligase type 1 subfamily. In terms of assembly, monomer.

It is found in the cytoplasm. The enzyme catalyses tRNA(Glu) + L-glutamate + ATP = L-glutamyl-tRNA(Glu) + AMP + diphosphate. Functionally, catalyzes the attachment of glutamate to tRNA(Glu) in a two-step reaction: glutamate is first activated by ATP to form Glu-AMP and then transferred to the acceptor end of tRNA(Glu). The chain is Glutamate--tRNA ligase from Burkholderia pseudomallei (strain 668).